Here is a 171-residue protein sequence, read N- to C-terminus: Transcription antitermination protein NusB (171 aa).

It belongs to the NusB family.

Involved in transcription antitermination. Required for transcription of ribosomal RNA (rRNA) genes. Binds specifically to the boxA antiterminator sequence of the ribosomal RNA (rrn) operons. The sequence is that of Transcription antitermination protein NusB from Brucella melitensis biotype 1 (strain ATCC 23456 / CCUG 17765 / NCTC 10094 / 16M).